Consider the following 99-residue polypeptide: MKFFVIALIVLLGLLQYRLWSGDNSLPEYFVLQKQIAAQQEGNAKLNERNQVLKEEIIDLKSGTEAIEERARNELGMVKEGETFYRVVGGDRSVSSPSQ.

Topologically, residues 1–3 (MKF) are cytoplasmic. A helical membrane pass occupies residues 4–21 (FVIALIVLLGLLQYRLWS). Residues 22-99 (GDNSLPEYFV…GDRSVSSPSQ (78 aa)) lie on the Periplasmic side of the membrane. Residues 31-73 (VLQKQIAAQQEGNAKLNERNQVLKEEIIDLKSGTEAIEERARN) adopt a coiled-coil conformation.

Belongs to the FtsB family. Part of a complex composed of FtsB, FtsL and FtsQ.

It localises to the cell inner membrane. In terms of biological role, essential cell division protein. May link together the upstream cell division proteins, which are predominantly cytoplasmic, with the downstream cell division proteins, which are predominantly periplasmic. The polypeptide is Cell division protein FtsB (Shewanella sp. (strain ANA-3)).